A 277-amino-acid chain; its full sequence is Ribosomal RNA small subunit methyltransferase A (277 aa).

S-adenosyl-L-methionine-binding residues include N23, L25, G50, E75, D98, and N121.

It belongs to the class I-like SAM-binding methyltransferase superfamily. rRNA adenine N(6)-methyltransferase family. RsmA subfamily.

The protein localises to the cytoplasm. The catalysed reaction is adenosine(1518)/adenosine(1519) in 16S rRNA + 4 S-adenosyl-L-methionine = N(6)-dimethyladenosine(1518)/N(6)-dimethyladenosine(1519) in 16S rRNA + 4 S-adenosyl-L-homocysteine + 4 H(+). Its function is as follows. Specifically dimethylates two adjacent adenosines (A1518 and A1519) in the loop of a conserved hairpin near the 3'-end of 16S rRNA in the 30S particle. May play a critical role in biogenesis of 30S subunits. The protein is Ribosomal RNA small subunit methyltransferase A of Paraburkholderia xenovorans (strain LB400).